The chain runs to 1155 residues: ATP-dependent helicase/deoxyribonuclease subunit B (1155 aa).

A UvrD-like helicase ATP-binding domain is found at 1-278; the sequence is MSQLNAYIGR…FTKQERFENR (278 aa). An ATP-binding site is contributed by 9–16; it reads GRAGTGKS. One can recognise a UvrD-like helicase C-terminal domain in the interval 270 to 584; it reads TKQERFENRD…SIGSMDLAKV (315 aa). Residues C785, C1112, C1115, and C1121 each coordinate [4Fe-4S] cluster.

The protein belongs to the helicase family. AddB/RexB type 1 subfamily. As to quaternary structure, heterodimer of AddA and AddB. The cofactor is Mg(2+). [4Fe-4S] cluster serves as cofactor.

In terms of biological role, the heterodimer acts as both an ATP-dependent DNA helicase and an ATP-dependent, dual-direction single-stranded exonuclease. Recognizes the chi site generating a DNA molecule suitable for the initiation of homologous recombination. The AddB subunit has 5' -&gt; 3' nuclease activity but not helicase activity. This chain is ATP-dependent helicase/deoxyribonuclease subunit B, found in Staphylococcus carnosus (strain TM300).